A 346-amino-acid chain; its full sequence is tRNA N6-adenosine threonylcarbamoyltransferase (346 aa).

Fe cation-binding residues include H110 and H114. Substrate contacts are provided by residues 132 to 136, D165, G178, and N274; that span reads LLSGG. Residue D298 participates in Fe cation binding.

The protein belongs to the KAE1 / TsaD family. Requires Fe(2+) as cofactor.

The protein resides in the cytoplasm. The catalysed reaction is L-threonylcarbamoyladenylate + adenosine(37) in tRNA = N(6)-L-threonylcarbamoyladenosine(37) in tRNA + AMP + H(+). Functionally, required for the formation of a threonylcarbamoyl group on adenosine at position 37 (t(6)A37) in tRNAs that read codons beginning with adenine. Is involved in the transfer of the threonylcarbamoyl moiety of threonylcarbamoyl-AMP (TC-AMP) to the N6 group of A37, together with TsaE and TsaB. TsaD likely plays a direct catalytic role in this reaction. This Borreliella burgdorferi (strain ATCC 35210 / DSM 4680 / CIP 102532 / B31) (Borrelia burgdorferi) protein is tRNA N6-adenosine threonylcarbamoyltransferase.